A 77-amino-acid polypeptide reads, in one-letter code: Conotoxin Cl6.12 (77 aa).

The first 20 residues, 1–20 (MKFYLLLTAALLLTAVIIEA), serve as a signal peptide directing secretion. Positions 21–36 (APTDHQDEARDLMREE) are excised as a propeptide. Cystine bridges form between cysteine 43–cysteine 58, cysteine 51–cysteine 62, and cysteine 57–cysteine 68.

As to expression, expressed by the venom duct.

It localises to the secreted. This Californiconus californicus (California cone) protein is Conotoxin Cl6.12.